We begin with the raw amino-acid sequence, 209 residues long: Orotate phosphoribosyltransferase (209 aa).

5-phospho-alpha-D-ribose 1-diphosphate is bound by residues Arg96, Lys100, His102, and 122 to 130; that span reads EDLISTGGS. Ser126 lines the orotate pocket.

This sequence belongs to the purine/pyrimidine phosphoribosyltransferase family. PyrE subfamily. Homodimer. The cofactor is Mg(2+).

The catalysed reaction is orotidine 5'-phosphate + diphosphate = orotate + 5-phospho-alpha-D-ribose 1-diphosphate. It participates in pyrimidine metabolism; UMP biosynthesis via de novo pathway; UMP from orotate: step 1/2. Catalyzes the transfer of a ribosyl phosphate group from 5-phosphoribose 1-diphosphate to orotate, leading to the formation of orotidine monophosphate (OMP). The polypeptide is Orotate phosphoribosyltransferase (Streptococcus thermophilus (strain CNRZ 1066)).